A 360-amino-acid polypeptide reads, in one-letter code: Alanine racemase (360 aa).

K36 serves as the catalytic Proton acceptor; specific for D-alanine. K36 is modified (N6-(pyridoxal phosphate)lysine). R132 lines the substrate pocket. Residue Y256 is the Proton acceptor; specific for L-alanine of the active site. M304 provides a ligand contact to substrate.

The protein belongs to the alanine racemase family. Pyridoxal 5'-phosphate serves as cofactor.

The enzyme catalyses L-alanine = D-alanine. The protein operates within amino-acid biosynthesis; D-alanine biosynthesis; D-alanine from L-alanine: step 1/1. Functionally, catalyzes the interconversion of L-alanine and D-alanine. May also act on other amino acids. The polypeptide is Alanine racemase (alr) (Haemophilus influenzae (strain ATCC 51907 / DSM 11121 / KW20 / Rd)).